The primary structure comprises 260 residues: Hydroxyacylglutathione hydrolase (260 aa).

Zn(2+) is bound by residues His-61, His-63, Asp-65, His-66, His-119, Asp-138, and His-176.

It belongs to the metallo-beta-lactamase superfamily. Glyoxalase II family. Monomer. The cofactor is Zn(2+).

The catalysed reaction is an S-(2-hydroxyacyl)glutathione + H2O = a 2-hydroxy carboxylate + glutathione + H(+). Its pathway is secondary metabolite metabolism; methylglyoxal degradation; (R)-lactate from methylglyoxal: step 2/2. Functionally, thiolesterase that catalyzes the hydrolysis of S-D-lactoyl-glutathione to form glutathione and D-lactic acid. This Brucella anthropi (strain ATCC 49188 / DSM 6882 / CCUG 24695 / JCM 21032 / LMG 3331 / NBRC 15819 / NCTC 12168 / Alc 37) (Ochrobactrum anthropi) protein is Hydroxyacylglutathione hydrolase.